We begin with the raw amino-acid sequence, 510 residues long: MPARDLLPDKSALLHGLSKYIENRTIYGNILIHKRLLEDLEREAKEGLVTAEIALDEVKRLKEISENLLVSFEIVNSENLHGSLNGVLRDYCLSRKCTIVTTDEIQKKLSESLNIDVVLLQPSQTELEIEKMFDETTMSVHLKEGVTPKAKKGKPGSWQFVELLSNPLTSTDIKRVVNEILSSVNYVKDSFIEIERKGSTIVQLGNYRVVIIRPPLSDGWEVTITRPVVKKKLEEYNMDEKLLKRLRDKAEGILIAGSPGMGKTTFAQALAEFYTRMNKVVKTIESPRDMHLPPEVTQYSKNYAEVGELHDILLLSRPDYTVYDEMRNDEDFKLYIDLRLAGIGMIGVVHATSPIDAIHRFINRIDIGTIPNILDTVVFINSGNVAKVYGLDITVKVPTGLKEADLARPVVEVKDLISDKAEYEIYVFGEQTMIVPVKNLQTNSTQRRLESMINNIIPSASISFENGEYIITIPRDEIGMFNKKVVSKLKKYEKKYKIKIRVRFPDEDTT.

In terms of assembly, homohexamer. Interacts with Holliday junction resolvase Hjc, interacts with helicase Hjm (Hel308).

It carries out the reaction ATP + H2O = ADP + phosphate + H(+). In terms of biological role, important for growth at low temperatures (less than 65 degrees Celsius in this organism). Promotes Holliday junction (HJ) branch migration and unwinds Y-shaped DNA (but not replication forks or dsDNA) in an ATP hydrolysis-dependent manner. Stimulates cleavage by HJ resolvase Hjc. Hjc, Hjm (Hel308) and PINA coordinate HJ migration and cleavage of replication forks in a coordinated way. Probably acts as an ATP-dependent pump that pulls DNA through the hexamer. The chain is Holliday junction branch migration ATPase PINA from Sulfolobus acidocaldarius (strain ATCC 33909 / DSM 639 / JCM 8929 / NBRC 15157 / NCIMB 11770).